The primary structure comprises 396 residues: Proteasome-activating nucleotidase (396 aa).

The stretch at Ile-16–Pro-57 forms a coiled coil. Residues Gly-181 to Leu-186 and His-320 contribute to the ATP site. A docks into pockets in the proteasome alpha-ring to cause gate opening region spans residues Ile-394–Gly-396.

Belongs to the AAA ATPase family. As to quaternary structure, homohexamer. The hexameric complex has a two-ring architecture resembling a top hat that caps the 20S proteasome core at one or both ends. Upon ATP-binding, the C-terminus of PAN interacts with the alpha-rings of the proteasome core by binding to the intersubunit pockets.

It is found in the cytoplasm. In terms of biological role, ATPase which is responsible for recognizing, binding, unfolding and translocation of substrate proteins into the archaeal 20S proteasome core particle. Is essential for opening the gate of the 20S proteasome via an interaction with its C-terminus, thereby allowing substrate entry and access to the site of proteolysis. Thus, the C-termini of the proteasomal ATPase function like a 'key in a lock' to induce gate opening and therefore regulate proteolysis. Unfolding activity requires energy from ATP hydrolysis, whereas ATP binding alone promotes ATPase-20S proteasome association which triggers gate opening, and supports translocation of unfolded substrates. This chain is Proteasome-activating nucleotidase, found in Pyrococcus abyssi (strain GE5 / Orsay).